We begin with the raw amino-acid sequence, 158 residues long: Transcription elongation factor GreA (158 aa).

The protein belongs to the GreA/GreB family.

Necessary for efficient RNA polymerase transcription elongation past template-encoded arresting sites. The arresting sites in DNA have the property of trapping a certain fraction of elongating RNA polymerases that pass through, resulting in locked ternary complexes. Cleavage of the nascent transcript by cleavage factors such as GreA or GreB allows the resumption of elongation from the new 3'terminus. GreA releases sequences of 2 to 3 nucleotides. This chain is Transcription elongation factor GreA, found in Rhizobium leguminosarum bv. trifolii (strain WSM2304).